The following is a 221-amino-acid chain: Endonuclease V (221 aa).

Asp38 and Asp104 together coordinate Mg(2+).

The protein belongs to the endonuclease V family. It depends on Mg(2+) as a cofactor.

It is found in the cytoplasm. The catalysed reaction is Endonucleolytic cleavage at apurinic or apyrimidinic sites to products with a 5'-phosphate.. In terms of biological role, DNA repair enzyme involved in the repair of deaminated bases. Selectively cleaves double-stranded DNA at the second phosphodiester bond 3' to a deoxyinosine leaving behind the intact lesion on the nicked DNA. Recognizes only deoxyinosine. The chain is Endonuclease V from Archaeoglobus fulgidus (strain ATCC 49558 / DSM 4304 / JCM 9628 / NBRC 100126 / VC-16).